The following is a 481-amino-acid chain: Glutamyl-tRNA(Gln) amidotransferase subunit A (481 aa).

Catalysis depends on charge relay system residues lysine 76 and serine 151. The active-site Acyl-ester intermediate is the serine 175.

Belongs to the amidase family. GatA subfamily. In terms of assembly, heterotrimer of A, B and C subunits.

It carries out the reaction L-glutamyl-tRNA(Gln) + L-glutamine + ATP + H2O = L-glutaminyl-tRNA(Gln) + L-glutamate + ADP + phosphate + H(+). Allows the formation of correctly charged Gln-tRNA(Gln) through the transamidation of misacylated Glu-tRNA(Gln) in organisms which lack glutaminyl-tRNA synthetase. The reaction takes place in the presence of glutamine and ATP through an activated gamma-phospho-Glu-tRNA(Gln). The sequence is that of Glutamyl-tRNA(Gln) amidotransferase subunit A from Neisseria meningitidis serogroup C / serotype 2a (strain ATCC 700532 / DSM 15464 / FAM18).